The sequence spans 384 residues: Probable L-tyrosine/L-aspartate decarboxylase (384 aa).

K233 is modified (N6-(pyridoxal phosphate)lysine).

Belongs to the group II decarboxylase family. MfnA subfamily. It depends on pyridoxal 5'-phosphate as a cofactor.

It catalyses the reaction L-tyrosine + H(+) = tyramine + CO2. It carries out the reaction L-aspartate + H(+) = beta-alanine + CO2. The protein operates within cofactor biosynthesis; methanofuran biosynthesis. It participates in cofactor biosynthesis; coenzyme A biosynthesis. Functionally, catalyzes the decarboxylation of L-tyrosine to produce tyramine for methanofuran biosynthesis. Can also catalyze the decarboxylation of L-aspartate to produce beta-alanine for coenzyme A (CoA) biosynthesis. The polypeptide is Probable L-tyrosine/L-aspartate decarboxylase (Methanococcus maripaludis (strain C5 / ATCC BAA-1333)).